Consider the following 150-residue polypeptide: Peptide methionine sulfoxide reductase MsrB (150 aa).

The region spanning 9–132 is the MsrB domain; sequence EAELKRTLTK…NSAALKFIPF (124 aa). The active-site Nucleophile is the C121.

This sequence belongs to the MsrB Met sulfoxide reductase family.

The enzyme catalyses L-methionyl-[protein] + [thioredoxin]-disulfide + H2O = L-methionyl-(R)-S-oxide-[protein] + [thioredoxin]-dithiol. In Mycoplasma genitalium (strain ATCC 33530 / DSM 19775 / NCTC 10195 / G37) (Mycoplasmoides genitalium), this protein is Peptide methionine sulfoxide reductase MsrB.